Here is a 131-residue protein sequence, read N- to C-terminus: Ribonuclease P protein component (131 aa).

Belongs to the RnpA family. In terms of assembly, consists of a catalytic RNA component (M1 or rnpB) and a protein subunit.

It carries out the reaction Endonucleolytic cleavage of RNA, removing 5'-extranucleotides from tRNA precursor.. Functionally, RNaseP catalyzes the removal of the 5'-leader sequence from pre-tRNA to produce the mature 5'-terminus. It can also cleave other RNA substrates such as 4.5S RNA. The protein component plays an auxiliary but essential role in vivo by binding to the 5'-leader sequence and broadening the substrate specificity of the ribozyme. The sequence is that of Ribonuclease P protein component from Cyanothece sp. (strain PCC 7425 / ATCC 29141).